The chain runs to 591 residues: Oxaloacetate decarboxylase alpha chain (591 aa).

Residues 3-263 (IAITDVVLRD…DTGLDILKLE (261 aa)) form the Pyruvate carboxyltransferase domain. Residues 518–591 (PAGAGTPVTA…SVGDTLMTLA (74 aa)) form the Biotinyl-binding domain. The residue at position 557 (Lys-557) is an N6-biotinyllysine.

Composed of three chains (alpha, beta, and gamma). It depends on biotin as a cofactor.

The enzyme catalyses oxaloacetate + 2 Na(+)(in) + H(+) = pyruvate + 2 Na(+)(out) + CO2. In terms of biological role, catalyzes the decarboxylation of oxaloacetate coupled to Na(+) translocation. The protein is Oxaloacetate decarboxylase alpha chain (oadA1) of Salmonella typhimurium (strain LT2 / SGSC1412 / ATCC 700720).